A 549-amino-acid polypeptide reads, in one-letter code: Cation/acetate symporter ActP (549 aa).

Helical transmembrane passes span 33–53 (WQAI…TYWA), 77–97 (LAIA…ALVF), 103–123 (GLIY…LIAE), 148–168 (ILSA…QMVG), 183–203 (IAVV…GMLA), 206–226 (WVQI…AFMV), 262–282 (ISAL…PHIL), 303–323 (GFMG…IMLV), 355–375 (LFLG…VAGL), 404–424 (VSKI…MLFE), 428–448 (IAFM…PIIL), 464–484 (GGWL…TIWV), and 493–513 (IFPY…GIWF).

The protein belongs to the sodium:solute symporter (SSF) (TC 2.A.21) family.

It is found in the cell inner membrane. Functionally, transports acetate. In Shigella boydii serotype 4 (strain Sb227), this protein is Cation/acetate symporter ActP.